The following is a 556-amino-acid chain: Formate--tetrahydrofolate ligase (556 aa).

An ATP-binding site is contributed by 65 to 72 (TPAGEGKS).

It belongs to the formate--tetrahydrofolate ligase family.

It carries out the reaction (6S)-5,6,7,8-tetrahydrofolate + formate + ATP = (6R)-10-formyltetrahydrofolate + ADP + phosphate. It participates in one-carbon metabolism; tetrahydrofolate interconversion. In Streptococcus agalactiae serotype V (strain ATCC BAA-611 / 2603 V/R), this protein is Formate--tetrahydrofolate ligase.